The chain runs to 85 residues: UPF0297 protein CD630_12830 (85 aa).

This sequence belongs to the UPF0297 family.

In Clostridioides difficile (strain 630) (Peptoclostridium difficile), this protein is UPF0297 protein CD630_12830.